An 843-amino-acid chain; its full sequence is Protein P (843 aa).

The terminal protein domain (TP) stretch occupies residues Met-1–Gln-177. The segment at Glu-178–Leu-346 is spacer. Disordered stretches follow at residues Gln-180–Ser-202 and Gln-226–Glu-315. Residues Arg-239–Thr-249 are compositionally biased toward basic residues. Composition is skewed to polar residues over residues Thr-262–His-277 and Pro-287–Gly-299. Positions Glu-347–Gln-690 are polymerase/reverse transcriptase domain (RT). A Reverse transcriptase domain is found at Glu-357–Ile-600. The Mg(2+) site is built by Asp-429, Asp-551, and Asp-552.

This sequence belongs to the hepadnaviridae P protein family.

It carries out the reaction DNA(n) + a 2'-deoxyribonucleoside 5'-triphosphate = DNA(n+1) + diphosphate. It catalyses the reaction Endonucleolytic cleavage to 5'-phosphomonoester.. With respect to regulation, activated by host HSP70 and HSP40 in vitro to be able to bind the epsilon loop of the pgRNA. Because deletion of the RNase H region renders the protein partly chaperone-independent, the chaperones may be needed indirectly to relieve occlusion of the RNA-binding site by this domain. Inhibited by several reverse-transcriptase inhibitors: Lamivudine, Adefovir and Entecavir. Its function is as follows. Multifunctional enzyme that converts the viral RNA genome into dsDNA in viral cytoplasmic capsids. This enzyme displays a DNA polymerase activity that can copy either DNA or RNA templates, and a ribonuclease H (RNase H) activity that cleaves the RNA strand of RNA-DNA heteroduplexes in a partially processive 3'- to 5'-endonucleasic mode. Neo-synthesized pregenomic RNA (pgRNA) are encapsidated together with the P protein, and reverse-transcribed inside the nucleocapsid. Initiation of reverse-transcription occurs first by binding the epsilon loop on the pgRNA genome, and is initiated by protein priming, thereby the 5'-end of (-)DNA is covalently linked to P protein. Partial (+)DNA is synthesized from the (-)DNA template and generates the relaxed circular DNA (RC-DNA) genome. After budding and infection, the RC-DNA migrates in the nucleus, and is converted into a plasmid-like covalently closed circular DNA (cccDNA). The activity of P protein does not seem to be necessary for cccDNA generation, and is presumably released from (+)DNA by host nuclear DNA repair machinery. The polypeptide is Protein P (Hepatitis B virus genotype H (isolate United States/LAS2523/2002) (HBV-H)).